The primary structure comprises 788 residues: Protein TRS1 (788 aa).

2 disordered regions span residues M1–H82 and I610–V663. Positions R16–G25 are enriched in gly residues. Low complexity predominate over residues V26–G56. The tract at residues S74 to Y248 is RNA-binding. The span at L651–P660 shows a compositional bias: basic and acidic residues. Residues L672–A788 are interaction with host EIF2AK2/PKR.

Belongs to the herpesviridae US22 family. In terms of assembly, interacts with host EIF2AK2/PKR; this interaction retains EIF2AK2 to the host nucleus and prevents its activation. Interaction (via N-terminus) with host BECN1; this interaction inhibits host autophagy. Interacts with the viral DNA polymerase accessory subunit UL44. Interacts with host HSPA5.

The protein resides in the virion. It is found in the host cytoplasm. It localises to the host nucleus. Its function is as follows. Inhibits the establishment of the antiviral state in the infected cell. Prevents the phosphorylation of the host eukaryotic translation initiation factor eIF-2alpha/EIF2S1 and thus the shutoff of viral and cellular protein synthesis by directly interacting with EIF2AK2/PKR. Prevents stress granule formation in response to eIF-2alpha/EIF2S1 phosphorylation, thereby rescuing viral replication and protein synthesis. Also inhibits host autophagy by interacting with host Beclin-1/BECN1. The chain is Protein TRS1 (TRS1) from Human cytomegalovirus (strain Merlin) (HHV-5).